The primary structure comprises 406 residues: Ribulose bisphosphate carboxylase large chain (406 aa).

2 residues coordinate substrate: Asn101 and Thr151. The active-site Proton acceptor is Lys153. Lys155 serves as a coordination point for substrate. 3 residues coordinate Mg(2+): Lys179, Asp181, and Glu182. Residue Lys179 is modified to N6-carboxylysine. The active-site Proton acceptor is the His272. Arg273, His305, and Ser357 together coordinate substrate.

The protein belongs to the RuBisCO large chain family. Type I subfamily. As to quaternary structure, heterohexadecamer of 8 large chains and 8 small chains; disulfide-linked. The disulfide link is formed within the large subunit homodimers. Requires Mg(2+) as cofactor. In terms of processing, the disulfide bond which can form in the large chain dimeric partners within the hexadecamer appears to be associated with oxidative stress and protein turnover.

Its subcellular location is the plastid. The protein resides in the chloroplast. It catalyses the reaction 2 (2R)-3-phosphoglycerate + 2 H(+) = D-ribulose 1,5-bisphosphate + CO2 + H2O. The catalysed reaction is D-ribulose 1,5-bisphosphate + O2 = 2-phosphoglycolate + (2R)-3-phosphoglycerate + 2 H(+). RuBisCO catalyzes two reactions: the carboxylation of D-ribulose 1,5-bisphosphate, the primary event in carbon dioxide fixation, as well as the oxidative fragmentation of the pentose substrate in the photorespiration process. Both reactions occur simultaneously and in competition at the same active site. The protein is Ribulose bisphosphate carboxylase large chain (rbcL) of Trichomanes striatum (Fern).